The chain runs to 460 residues: Inactive ubiquitin carboxyl-terminal hydrolase MINDY-4B (460 aa).

The tract at residues 41–76 (TNNSTPQNHEGNHTSADENEDGTGLSQPKGQGHLPS) is disordered.

The protein belongs to the MINDY deubiquitinase family. FAM188 subfamily.

The protein is Inactive ubiquitin carboxyl-terminal hydrolase MINDY-4B of Homo sapiens (Human).